The chain runs to 246 residues: Probable transcriptional regulatory protein RD1_2018 (246 aa).

It belongs to the TACO1 family.

It localises to the cytoplasm. This chain is Probable transcriptional regulatory protein RD1_2018, found in Roseobacter denitrificans (strain ATCC 33942 / OCh 114) (Erythrobacter sp. (strain OCh 114)).